A 473-amino-acid chain; its full sequence is Glutamate--tRNA ligase (473 aa).

Residues Pro11–Gly21 carry the 'HIGH' region motif. The short motif at Lys240–Arg244 is the 'KMSKS' region element. Lys243 serves as a coordination point for ATP.

The protein belongs to the class-I aminoacyl-tRNA synthetase family. Glutamate--tRNA ligase type 1 subfamily. Monomer.

It is found in the cytoplasm. It carries out the reaction tRNA(Glu) + L-glutamate + ATP = L-glutamyl-tRNA(Glu) + AMP + diphosphate. Functionally, catalyzes the attachment of glutamate to tRNA(Glu) in a two-step reaction: glutamate is first activated by ATP to form Glu-AMP and then transferred to the acceptor end of tRNA(Glu). The protein is Glutamate--tRNA ligase of Rhodopseudomonas palustris (strain BisB5).